The primary structure comprises 924 residues: Protein translocase subunit SecA (924 aa).

Residues Q87, 105 to 109 (GEGKT), and D515 each bind ATP. Residues C908, C910, C919, and H920 each coordinate Zn(2+).

The protein belongs to the SecA family. Monomer and homodimer. Part of the essential Sec protein translocation apparatus which comprises SecA, SecYEG and auxiliary proteins SecDF-YajC and YidC. Requires Zn(2+) as cofactor.

Its subcellular location is the cell inner membrane. The protein localises to the cytoplasm. The catalysed reaction is ATP + H2O + cellular proteinSide 1 = ADP + phosphate + cellular proteinSide 2.. In terms of biological role, part of the Sec protein translocase complex. Interacts with the SecYEG preprotein conducting channel. Has a central role in coupling the hydrolysis of ATP to the transfer of proteins into and across the cell membrane, serving both as a receptor for the preprotein-SecB complex and as an ATP-driven molecular motor driving the stepwise translocation of polypeptide chains across the membrane. The chain is Protein translocase subunit SecA from Cupriavidus pinatubonensis (strain JMP 134 / LMG 1197) (Cupriavidus necator (strain JMP 134)).